A 303-amino-acid chain; its full sequence is Protoheme IX farnesyltransferase (303 aa).

Helical transmembrane passes span 25-45 (MGLVQGNLIPAFAGSWLAIVL), 54-74 (IPQILLMLIGSTLIMGGACAL), 104-124 (LLILSFGMMVIGEIALFILNI), 125-145 (PSGVIGLMGIIGYVSFYSIWS), 151-171 (WNTVIGAFPGAVPPVIGWTAI), 179-199 (AIALFLVIFCWQPIHFYALAI), 228-248 (VWLILLLPLPFLLSDLGPVFI), and 280-300 (FVYSLNYLVLFFALVVIISLI).

Belongs to the UbiA prenyltransferase family. Protoheme IX farnesyltransferase subfamily. In terms of assembly, interacts with CtaA.

It is found in the cell membrane. The catalysed reaction is heme b + (2E,6E)-farnesyl diphosphate + H2O = Fe(II)-heme o + diphosphate. Its pathway is porphyrin-containing compound metabolism; heme O biosynthesis; heme O from protoheme: step 1/1. Functionally, converts heme B (protoheme IX) to heme O by substitution of the vinyl group on carbon 2 of heme B porphyrin ring with a hydroxyethyl farnesyl side group. The protein is Protoheme IX farnesyltransferase of Staphylococcus carnosus (strain TM300).